We begin with the raw amino-acid sequence, 302 residues long: Mitochondrial glycine transporter (302 aa).

3 Solcar repeats span residues 22–112 (HPVF…LKHH), 119–203 (PKPL…AKKL), and 213–297 (FSPV…MMEK). The next 6 helical transmembrane spans lie at 28 to 53 (FVCGSLSGTCSTLLFQPLDLVKTRLQ), 87 to 113 (GVSPSFLRCIPGVGLYFSTLYTLKHHF), 125 to 150 (VMLGAGSRTVAAVCMLPFTVVKTRYE), 178 to 201 (GLTATLMRDAPFSGIYLMFYTRAK), 217 to 243 (LNFGCGIVAGILASVATQPADVIKTHI), and 272 to 290 (GGLPRALRRTLMAAMAWTV).

The protein belongs to the mitochondrial carrier (TC 2.A.29) family. SLC25A38 subfamily.

The protein resides in the mitochondrion inner membrane. The enzyme catalyses glycine(in) = glycine(out). Mitochondrial glycine transporter that imports glycine into the mitochondrial matrix. Plays an important role in providing glycine for the first enzymatic step in heme biosynthesis, the condensation of glycine with succinyl-CoA to produce 5-aminolevulinate (ALA) in the mitochondrial matrix. Required during erythropoiesis. In terms of biological role, may play a role as pro-apoptotic protein that induces caspase-dependent apoptosis. The protein is Mitochondrial glycine transporter of Xenopus tropicalis (Western clawed frog).